Consider the following 738-residue polypeptide: Polyphosphate kinase (738 aa).

Residues 1-48 (MIGNDRWVTEIETGPVTEARPDTNAREPGDRTPAAPPAATPAATTDQL) form a disordered region. Positions 19–30 (ARPDTNAREPGD) are enriched in basic and acidic residues. Residue asparagine 91 participates in ATP binding. Residues arginine 427 and arginine 457 each coordinate Mg(2+). Histidine 487 (phosphohistidine intermediate) is an active-site residue. ATP-binding residues include tyrosine 520, arginine 620, and histidine 648.

It belongs to the polyphosphate kinase 1 (PPK1) family. Requires Mg(2+) as cofactor. In terms of processing, an intermediate of this reaction is the autophosphorylated ppk in which a phosphate is covalently linked to a histidine residue through a N-P bond.

The catalysed reaction is [phosphate](n) + ATP = [phosphate](n+1) + ADP. Its function is as follows. Catalyzes the reversible transfer of the terminal phosphate of ATP to form a long-chain polyphosphate (polyP). The protein is Polyphosphate kinase of Mycobacterium marinum (strain ATCC BAA-535 / M).